The following is a 558-amino-acid chain: SPATS2-like protein (558 aa).

An N-acetylalanine modification is found at A2. Residues 63-79 (GKKKNNKRKRSKSKQHQ) show a composition bias toward basic residues. Disordered stretches follow at residues 63–148 (GKKK…RGIT) and 161–202 (DGNP…SNAP). Composition is skewed to basic and acidic residues over residues 80–92 (GNKDAKDKGERPE) and 110–142 (GCEKDSSSPDSAREKLALTPREKKISILEEPPR). Residue S120 is modified to Phosphoserine. Residues 279 to 344 (KEEAMDILTA…ARFSCDIEQL (66 aa)) are a coiled coil. The segment at 383–514 (KQGNFSRKSS…SEKARRRQHA (132 aa)) is disordered. Positions 416 to 433 (DACQQTMPTNKQQNGPSN) are enriched in polar residues. S455 carries the phosphoserine modification. Basic residues predominate over residues 469–485 (HEHRRQPHNGFRPKNKG).

The protein belongs to the SPATS2 family.

It localises to the cytoplasm. It is found in the nucleus. The protein localises to the nucleolus. The protein is SPATS2-like protein (Spats2l) of Rattus norvegicus (Rat).